A 387-amino-acid chain; its full sequence is MNIHEYQAKAIFVDNGIPTLKGKVAFSVDEAVANAKELGGSVWAVKAQIHAGGRGLGGGVKIAKNLDEVKDYASKILGMNLVTHQTGPEGKLVQKLYIESGANIVKEYYLAILFNRMAEQITIIASSEGGMDIEKVAKESPEKIAKVGIDPQIGFKMFHGLEVARVLGLDKDEGKKLISMIAKLYKLYMDKDMNMLEINPLIKTAEGDFYALDAKCSFDDSALYRHPEIAELRDTTEENPAEREAAEFGLSYVKLDGDVACMVNGAGLAMATMDIINYSGAKPANFLDVGGGASPETVAKAFEIILRDKNVKVIFINIFGGIVRCDRIANGILEATKNVEVNIPIVVRLDGTNAAEAKTILDNSNLKNIKAATNLKNGAELVKSLVG.

ATP is bound by residues Lys46, 53-55, Glu99, Ala102, and Glu107; that span reads GRG. Mg(2+)-binding residues include Asn199 and Asp213. Substrate contacts are provided by residues Asn264 and 321 to 323; that span reads GIV.

It belongs to the succinate/malate CoA ligase beta subunit family. Heterotetramer of two alpha and two beta subunits. The cofactor is Mg(2+).

It carries out the reaction succinate + ATP + CoA = succinyl-CoA + ADP + phosphate. It catalyses the reaction GTP + succinate + CoA = succinyl-CoA + GDP + phosphate. It participates in carbohydrate metabolism; tricarboxylic acid cycle; succinate from succinyl-CoA (ligase route): step 1/1. Succinyl-CoA synthetase functions in the citric acid cycle (TCA), coupling the hydrolysis of succinyl-CoA to the synthesis of either ATP or GTP and thus represents the only step of substrate-level phosphorylation in the TCA. The beta subunit provides nucleotide specificity of the enzyme and binds the substrate succinate, while the binding sites for coenzyme A and phosphate are found in the alpha subunit. This Campylobacter jejuni (strain RM1221) protein is Succinate--CoA ligase [ADP-forming] subunit beta.